The primary structure comprises 113 residues: Large ribosomal subunit protein P1 (113 aa).

Residues 84–113 (APAAAAKKETKKEEVKKEESDDDMGMGLFD) are disordered. Residues 89 to 102 (AKKETKKEEVKKEE) are compositionally biased toward basic and acidic residues.

It belongs to the eukaryotic ribosomal protein P1/P2 family. As to quaternary structure, P1 and P2 exist as dimers at the large ribosomal subunit.

Plays an important role in the elongation step of protein synthesis. This chain is Large ribosomal subunit protein P1 (rplp1), found in Dictyostelium discoideum (Social amoeba).